A 1203-amino-acid polypeptide reads, in one-letter code: MAGHDVQYGKHRTRRSFSRIKEVLDLPNLIEIQTDSFKAFLDHGLKEVFEDVLPISNFTDTMELEFVGYEIKEPKYTLEEARIHDASYSAPIFVTFRLINKETSEIKTQEVFFGDFPIMTEMGTFIINGGERIIVSQLVRSPGVYFNDKVDKNGKVGYGSTVIPNRGAWLELESDSKDITYTRIDRTRKIPFTTLVRALGFSGDDEIFDIFGDSELVRNTVEKDIHKNPMDSRTDEALKEIYERLRPGEPKTAESSRSLLVARFFDPRRYDLAAVGRYKINKKLNVKTRLLNQTIAEPLVDPETGEILVEAGTIMTRSVIESIESHLDGDLNKIVYIPNDAAVVTEPVVLQKFKVIAPTDPDRVVTIIGNANPDDKVRTVTPADILAEMSYFLNLAEGLGRVDDIDHLGNRRIRAVGELLANQVRLGLSRMERNVRERMSVQDNEVLTPQQIINIRPVTAAVKEFFGSSQLSQFMDQHNPLSELSHKRRLSALGPGGLTRDRAGYEVRDVHYTHYGRMCPIETPEGPNIGLINNLSSYGHLNKYGFVQTPYRKVDRETGVVTNEIVWLTADEEDEYTVAQANSRLNEDGTFAEKIVMGRHQGVNQEYPANIVDYMDVSPKQVVAVATACIPFLENDDSNRALMGANMQRQAVPLINPQAPYVGTGMEYQAAHDSGAAVIAQYDGKVTYADADKVEVRREDGSLDVYHIQKFRRSNSGTAYNQRTLVKVGDVVEKGDFIADGPSMENGEMALGQNPIVAYMTWEGYNFEDAVIMSERLVKDDVYTSVHLEEYESETRDTKLGPEEITREIPNVGEDALKDLDEMGIIRIGAEVKEGDILVGKVTPKGEKDLSAEERLLHAIFGDKSREVRDTSLRVPHGADGVVRDVKIFTRVNGDELQSGVNMLVRVYIAQKRKIKVGDKMAGRHGNKGVVSRIVPVEDMPYLPDGTPVDIMLNPLGVPSRMNIGQVMELHLGMAARTLGIHIATPVFDGASSEDLWSTVKEAGMDSDAKTILYDGRTGEPFDNRVSVGVMYMIKLHHMVDDKLHARSVGPYSTVTQQPLGGKAQFGGQRFGEMEVWALEAYGASNVLQEILTYKSDDINGRLKAYEAITKGKPIPKPGVPESFRVLVKELQSLGLDMRVLDEDDQEVELRDLDEGMDEDVIHVDDLEKAREKAAQEAKAAFEAEEAEKATKAEATEEAAEQE.

The span at 1174-1195 (AAQEAKAAFEAEEAEKATKAEA) shows a compositional bias: basic and acidic residues. A disordered region spans residues 1174–1203 (AAQEAKAAFEAEEAEKATKAEATEEAAEQE).

It belongs to the RNA polymerase beta chain family. As to quaternary structure, the RNAP catalytic core consists of 2 alpha, 1 beta, 1 beta' and 1 omega subunit. When a sigma factor is associated with the core the holoenzyme is formed, which can initiate transcription.

The catalysed reaction is RNA(n) + a ribonucleoside 5'-triphosphate = RNA(n+1) + diphosphate. In terms of biological role, DNA-dependent RNA polymerase catalyzes the transcription of DNA into RNA using the four ribonucleoside triphosphates as substrates. This is DNA-directed RNA polymerase subunit beta from Streptococcus pneumoniae (strain JJA).